Here is a 37-residue protein sequence, read N- to C-terminus: Large ribosomal subunit protein bL36 (37 aa).

This sequence belongs to the bacterial ribosomal protein bL36 family.

In Oleidesulfovibrio alaskensis (strain ATCC BAA-1058 / DSM 17464 / G20) (Desulfovibrio alaskensis), this protein is Large ribosomal subunit protein bL36 (rpmJ).